The sequence spans 510 residues: ATP synthase subunit alpha (510 aa).

169-176 (GDRQTGKT) contributes to the ATP binding site.

The protein belongs to the ATPase alpha/beta chains family. In terms of assembly, F-type ATPases have 2 components, CF(1) - the catalytic core - and CF(0) - the membrane proton channel. CF(1) has five subunits: alpha(3), beta(3), gamma(1), delta(1), epsilon(1). CF(0) has three main subunits: a(1), b(2) and c(9-12). The alpha and beta chains form an alternating ring which encloses part of the gamma chain. CF(1) is attached to CF(0) by a central stalk formed by the gamma and epsilon chains, while a peripheral stalk is formed by the delta and b chains.

The protein resides in the cell inner membrane. It catalyses the reaction ATP + H2O + 4 H(+)(in) = ADP + phosphate + 5 H(+)(out). Functionally, produces ATP from ADP in the presence of a proton gradient across the membrane. The alpha chain is a regulatory subunit. This Rickettsia massiliae (strain Mtu5) protein is ATP synthase subunit alpha.